The sequence spans 449 residues: C4-dicarboxylate transport protein (449 aa).

Helical transmembrane passes span 20–42, 62–84, 91–113, 164–181, 202–224, 239–261, 344–366, and 370–389; these read YLQL…HCYP, IISP…VGTV, AMVY…AHVV, ILQV…LALA, LVQM…TIGK, SFYL…FSGF, LALF…AGFI, and ATLT…ILGV.

Belongs to the dicarboxylate/amino acid:cation symporter (DAACS) (TC 2.A.23) family.

Its subcellular location is the cell inner membrane. Functionally, responsible for the transport of dicarboxylates such as succinate, fumarate, and malate from the periplasm across the inner membrane. The protein is C4-dicarboxylate transport protein (dctA) of Xylella fastidiosa (strain 9a5c).